The following is a 160-amino-acid chain: MDVTLPHHVVEDILERLPVKTLRKFKCVCSTWRSTIDSQRFKDRHMIHGQLLEDPDILLLGRWDPPSLSKNASLMTLTFDSSTMPFSFKIQTIPGKANFYKVTQSHSKSLKVVTVYDSNMEATGLVLYDMTQSERTFANFCLSFKNRETPTAYFPSLITI.

An F-box domain is found at 1 to 44; that stretch reads MDVTLPHHVVEDILERLPVKTLRKFKCVCSTWRSTIDSQRFKDR.

The protein is F-box protein At1g15015 of Arabidopsis thaliana (Mouse-ear cress).